We begin with the raw amino-acid sequence, 75 residues long: High-potential iron-sulfur protein (75 aa).

[4Fe-4S] cluster-binding residues include Cys-38, Cys-41, Cys-54, and Cys-68.

As to quaternary structure, homodimer. Monomer at different ionic strengths.

In terms of biological role, specific class of high-redox-potential 4Fe-4S ferredoxins. Functions in anaerobic electron transport in most purple and in some other photosynthetic bacteria and in at least one genus (Paracoccus) of halophilic, denitrifying bacteria. Competent in photosynthetic electron transfer to oxidized cytochrome bc1 complex via the membrane-bound c-type tetraheme. The chain is High-potential iron-sulfur protein (hip) from Rhodoferax fermentans.